A 369-amino-acid chain; its full sequence is Mitogen-activated protein kinase 4 (369 aa).

Residues Tyr32–Met319 form the Protein kinase domain. ATP contacts are provided by residues Ile38–Val46 and Lys61. The active-site Proton acceptor is the Asp158. Thr191 carries the phosphothreonine modification. Residues Thr191 to Tyr193 carry the TXY motif. Tyr193 is modified (phosphotyrosine).

Belongs to the protein kinase superfamily. CMGC Ser/Thr protein kinase family. MAP kinase subfamily. In terms of processing, dually phosphorylated on Thr-191 and Tyr-193, which activates the enzyme. In terms of tissue distribution, expressed in leaves and panicles.

It catalyses the reaction L-seryl-[protein] + ATP = O-phospho-L-seryl-[protein] + ADP + H(+). It carries out the reaction L-threonyl-[protein] + ATP = O-phospho-L-threonyl-[protein] + ADP + H(+). With respect to regulation, activated by threonine and tyrosine phosphorylation. The polypeptide is Mitogen-activated protein kinase 4 (MPK4) (Oryza sativa subsp. japonica (Rice)).